Reading from the N-terminus, the 276-residue chain is Ammonia monooxygenase alpha subunit (276 aa).

5 helical membrane passes run 29–49 (VYFPILIILLVGTYHMHFMLL), 66–86 (PVVTPIVGITYCSAIMYYLWV), 96–116 (LCVVCLLIGEWLTRYWGFYWW), 123–143 (FVTPGIMLPGALMLDFTLYLT), and 150–170 (ALVGGGFFGLLFYPGNWPIFG). Cu(+) contacts are provided by aspartate 187, histidine 191, and histidine 204. Residues 219–239 (VIAAFFSAFVSMLMFTVWWYL) traverse the membrane as a helical segment.

In terms of assembly, the soluble ammonia monooxygenase is a nonamer composed of three alpha subunits (AmoA), three beta subunits (AmoB) and three gamma subunits (Cytochrome c1 PetC). Requires Cu(+) as cofactor.

The protein localises to the cell membrane. Its subcellular location is the cytoplasm. The catalysed reaction is AH2 + NH4(+) + O2 = hydroxylamine + A + H2O + H(+). Its activity is regulated as follows. In vitro, inhibited by acetylene. In fact, acetylene is oxidized to ketene which binds irreversibly to His-191 of ammonia monooxygenase alpha subunit (AmoA). Its function is as follows. Part of the ammonia monooxygenase complex, which catalyzes the oxidation of ammonia to hydroxylamine, the first reaction in the process of ammonia oxidation to nitrite. This chain is Ammonia monooxygenase alpha subunit, found in Nitrosomonas europaea (strain ATCC 19718 / CIP 103999 / KCTC 2705 / NBRC 14298).